Reading from the N-terminus, the 81-residue chain is Large ribosomal subunit protein bL31B (81 aa).

It belongs to the bacterial ribosomal protein bL31 family. Type B subfamily. In terms of assembly, part of the 50S ribosomal subunit.

The chain is Large ribosomal subunit protein bL31B from Halalkalibacterium halodurans (strain ATCC BAA-125 / DSM 18197 / FERM 7344 / JCM 9153 / C-125) (Bacillus halodurans).